Consider the following 770-residue polypeptide: 3-isopropylmalate dehydratase (770 aa).

The [4Fe-4S] cluster site is built by cysteine 354, cysteine 415, and cysteine 418.

Belongs to the aconitase/IPM isomerase family. As to quaternary structure, monomer. [4Fe-4S] cluster is required as a cofactor.

The catalysed reaction is (2R,3S)-3-isopropylmalate = (2S)-2-isopropylmalate. It participates in amino-acid biosynthesis; L-leucine biosynthesis; L-leucine from 3-methyl-2-oxobutanoate: step 2/4. Functionally, catalyzes the isomerization between 2-isopropylmalate and 3-isopropylmalate, via the formation of 2-isopropylmaleate. The protein is 3-isopropylmalate dehydratase (LEU1) of Candida maltosa (Yeast).